Here is a 95-residue protein sequence, read N- to C-terminus: MALRPLHDRVIVKRLDNERKTASGIVIPDSAAEKPDQGEVLAVGPGKKTEDGKILPVDLKVGDKVLFGKYAGQGVKVDGEELLVIREEEILAVIQ.

The protein belongs to the GroES chaperonin family. Heptamer of 7 subunits arranged in a ring. Interacts with the chaperonin GroEL.

Its subcellular location is the cytoplasm. Functionally, together with the chaperonin GroEL, plays an essential role in assisting protein folding. The GroEL-GroES system forms a nano-cage that allows encapsulation of the non-native substrate proteins and provides a physical environment optimized to promote and accelerate protein folding. GroES binds to the apical surface of the GroEL ring, thereby capping the opening of the GroEL channel. The polypeptide is Co-chaperonin GroES (Bordetella avium (strain 197N)).